The sequence spans 675 residues: Heat shock 70 kDa protein, mitochondrial (675 aa).

The N-terminal 52 residues, Met1–Asn52, are a transit peptide targeting the mitochondrion. A disordered region spans residues Val639–Lys675. A compositionally biased stretch (gly residues) spans Gly649–Gly661. Acidic residues predominate over residues Pro666 to Lys675.

It belongs to the heat shock protein 70 family.

Its subcellular location is the mitochondrion. The polypeptide is Heat shock 70 kDa protein, mitochondrial (HSP1) (Pisum sativum (Garden pea)).